The primary structure comprises 765 residues: Protein transport protein Sec23A (765 aa).

At Thr2 the chain carries N-acetylthreonine. Residues Cys61, Cys66, Cys85, and Cys88 each contribute to the Zn(2+) site. Thr308 carries the phosphothreonine modification. A Gelsolin-like repeat occupies 632–718 (PEPVLLDSSS…EHGGSQARFL (87 aa)).

The protein belongs to the SEC23/SEC24 family. SEC23 subfamily. In terms of assembly, COPII is composed of at least five proteins: the Sec23/24 complex, the Sec13/31 complex and Sar1. Interacts with SEC23IP. Interacts with HTR4. Interacts with SEC16A. Interacts with SLC6A4. Interacts (as part of the Sec23/24 complex) with SEC22B; recruits SEC22B into COPII-coated vesicles and allows the transport of this cargo from the endoplasmic reticulum to the Golgi. Interacts (via Gelsolin-like repeat) with MIA2 and MIA3; specifically involved in the transport of large cargos like the collagen COL7A1. Interacts with DDHD1. Interacts with TMEM39A. Interacts with SACM1L; this interaction is reduced in the absence of TMEM39A. Interacts with kinase FAM20C; transport of FAM20C from the endoplasmic reticulum to the Golgi is likely to be mediated by COPII vesicles. High levels in brain and fibroblasts.

Its subcellular location is the cytoplasmic vesicle. It localises to the COPII-coated vesicle membrane. It is found in the endoplasmic reticulum membrane. The protein localises to the cytoplasm. The protein resides in the cytosol. Component of the coat protein complex II (COPII) which promotes the formation of transport vesicles from the endoplasmic reticulum (ER). The coat has two main functions, the physical deformation of the endoplasmic reticulum membrane into vesicles and the selection of cargo molecules for their transport to the Golgi complex. Required for the translocation of insulin-induced glucose transporter SLC2A4/GLUT4 to the cell membrane. The sequence is that of Protein transport protein Sec23A from Mus musculus (Mouse).